The primary structure comprises 191 residues: Octanoyltransferase (191 aa).

Residues 10-185 form the BPL/LPL catalytic domain; it reads ENSHDEIWLV…NILALLNNPP (176 aa). Residues 49-56, 116-118, and 129-131 each bind substrate; these read RGGQVTYH, SLG, and GLA. Catalysis depends on Cys147, which acts as the Acyl-thioester intermediate.

Belongs to the LipB family.

The protein resides in the cytoplasm. The enzyme catalyses octanoyl-[ACP] + L-lysyl-[protein] = N(6)-octanoyl-L-lysyl-[protein] + holo-[ACP] + H(+). Its pathway is protein modification; protein lipoylation via endogenous pathway; protein N(6)-(lipoyl)lysine from octanoyl-[acyl-carrier-protein]: step 1/2. In terms of biological role, catalyzes the transfer of endogenously produced octanoic acid from octanoyl-acyl-carrier-protein onto the lipoyl domains of lipoate-dependent enzymes. Lipoyl-ACP can also act as a substrate although octanoyl-ACP is likely to be the physiological substrate. In Salmonella choleraesuis (strain SC-B67), this protein is Octanoyltransferase.